A 508-amino-acid chain; its full sequence is Kinesin light chain (508 aa).

A coiled-coil region spans residues 34-129 (IAEVQKDNEK…KKHLEFMASV (96 aa)). A disordered region spans residues 156 to 175 (DEENEDRHNMSPTPPSQFAN). The residue at position 168 (T168) is a Phosphothreonine. 6 TPR repeats span residues 186-219 (LRTLHNLVIQYASQGRYEVAVPLCKQALEDLERT), 228-261 (ATMLNILALVYRDQNKYKEAANLLNDALSIRGKT), 270-303 (AATLNNLAVLYGKRGKYKDAEPLCKRALEIREKV), 312-345 (AKQLNNLALLCQNQGKYDEVEKYYQRALDIYESK), 354-387 (AKTKNNLAGCYLKQGRYTEAEILYKQVLTRAHER), and 437-470 (TTTLKNLGALYRRQGMFEAAETLEDCAMRSKKEA). A Phosphothreonine modification is found at T477. Phosphoserine is present on residues S480 and S485. Positions 484 to 508 (TSNEKRRSKAIKEDLDFSEEKNAKP) are disordered. Residues 493-508 (AIKEDLDFSEEKNAKP) are compositionally biased toward basic and acidic residues.

It belongs to the kinesin light chain family. Oligomeric complex composed of two heavy chains and two light chains. As to expression, ubiquitous.

It localises to the cytoplasm. The protein resides in the cytoskeleton. Its function is as follows. Kinesin is a microtubule-associated force-producing protein that may play a role in organelle transport. The light chain may function in coupling of cargo to the heavy chain or in the modulation of its ATPase activity. The polypeptide is Kinesin light chain (Klc) (Drosophila melanogaster (Fruit fly)).